The sequence spans 487 residues: Melanopsin (487 aa).

The segment at 1–37 is disordered; the sequence is MNPPSGPRTQEPSCVATPASPSRWDGYRSSTSSLDQP. The Extracellular segment spans residues 1–67; sequence MNPPSGPRTQ…VDVPDHAHYT (67 aa). Residues 68 to 88 traverse the membrane as a helical segment; the sequence is LGTVILLVGLTGILGNLMVIY. Residues 89–102 lie on the Cytoplasmic side of the membrane; sequence TFCRSRGLRTPANM. A helical membrane pass occupies residues 103-123; that stretch reads FIINLAVSDFFMSFTQAPVFF. Residues 124 to 139 are Extracellular-facing; it reads ASSLHKRWLFGEAGCE. Cysteine 138 and cysteine 216 are oxidised to a cystine. A helical transmembrane segment spans residues 140–160; that stretch reads FYAFCGALFGITSMITLMAIA. The Cytoplasmic segment spans residues 161 to 183; it reads LDRYLVITHPLATIGVVSKRRAA. A helical transmembrane segment spans residues 184–204; sequence LVLLGVWLYALAWSLPPFFGW. The Extracellular segment spans residues 205–233; the sequence is SAYVPEGLLTSCSWDYMSFTPSVRAYTML. The chain crosses the membrane as a helical span at residues 234 to 254; the sequence is LFCFVFFLPLLVIVYCYIFIF. Over 255–291 the chain is Cytoplasmic; the sequence is RAIRETGQALQTFRACEGGGRSPRQRQRLQREWKMAK. Residues 292–312 form a helical membrane-spanning segment; that stretch reads IELLVILLFVLSWAPYSIVAL. Topologically, residues 313–327 are extracellular; that stretch reads MAFAGYAHVLTPYMN. Residues 328 to 348 form a helical membrane-spanning segment; sequence SVPAVIAKASAIHNPIIYAIT. Lysine 335 is subject to N6-(retinylidene)lysine. Residues 349–487 lie on the Cytoplasmic side of the membrane; the sequence is HPKYRMAIAQ…LPLHPGWAFH (139 aa). Positions 436–459 are disordered; that stretch reads CSQGLEDREAKAPVRPQGREAETP. Residues 440–457 show a composition bias toward basic and acidic residues; the sequence is LEDREAKAPVRPQGREAE.

Belongs to the G-protein coupled receptor 1 family. Opsin subfamily. Eye. Expression is restricted within the ganglion cell layer.

It is found in the cell membrane. The protein resides in the cell projection. It localises to the axon. Its subcellular location is the dendrite. The protein localises to the perikaryon. In terms of biological role, photoreceptor that binds cis-retinaldehydes. Contributes to pupillar reflex, photoentrainment and other non-image forming responses to light. May be involved in the optokinetic visual tracking response. May be involved in the regulation of retinal hyaloid vessel growth and regression. This Felis catus (Cat) protein is Melanopsin (OPN4).